A 198-amino-acid chain; its full sequence is Elongation factor Ts (198 aa).

An involved in Mg(2+) ion dislocation from EF-Tu region spans residues 82 to 85 (SDFV).

This sequence belongs to the EF-Ts family.

It localises to the cytoplasm. Associates with the EF-Tu.GDP complex and induces the exchange of GDP to GTP. It remains bound to the aminoacyl-tRNA.EF-Tu.GTP complex up to the GTP hydrolysis stage on the ribosome. This chain is Elongation factor Ts, found in Desulfosudis oleivorans (strain DSM 6200 / JCM 39069 / Hxd3) (Desulfococcus oleovorans).